The primary structure comprises 184 residues: Photosystem I assembly protein Ycf4 (184 aa).

Helical transmembrane passes span 22-42 (FCWA…GTSS) and 57-77 (IIFF…LFIS).

This sequence belongs to the Ycf4 family.

Its subcellular location is the plastid. The protein localises to the chloroplast thylakoid membrane. Its function is as follows. Seems to be required for the assembly of the photosystem I complex. In Olimarabidopsis pumila (Dwarf rocket), this protein is Photosystem I assembly protein Ycf4.